Reading from the N-terminus, the 180-residue chain is Hypoxanthine-guanine phosphoribosyltransferase (180 aa).

Diphosphate contacts are provided by lysine 43 and glycine 44. The Mg(2+) site is built by glutamate 99 and aspartate 100. Aspartate 103 (proton acceptor) is an active-site residue. GMP-binding positions include lysine 131, 152–153 (FI), and aspartate 159. Position 165 (arginine 165) interacts with diphosphate.

It belongs to the purine/pyrimidine phosphoribosyltransferase family. Requires Mg(2+) as cofactor.

It localises to the cytoplasm. The catalysed reaction is IMP + diphosphate = hypoxanthine + 5-phospho-alpha-D-ribose 1-diphosphate. The enzyme catalyses GMP + diphosphate = guanine + 5-phospho-alpha-D-ribose 1-diphosphate. It functions in the pathway purine metabolism; IMP biosynthesis via salvage pathway; IMP from hypoxanthine: step 1/1. The protein operates within purine metabolism; GMP biosynthesis via salvage pathway; GMP from guanine: step 1/1. In terms of biological role, purine salvage pathway enzyme that catalyzes the transfer of the ribosyl-5-phosphate group from 5-phospho-alpha-D-ribose 1-diphosphate (PRPP) to the N9 position of the 6-oxopurines hypoxanthine and guanine to form the corresponding ribonucleotides IMP (inosine 5'-monophosphate) and GMP (guanosine 5'-monophosphate), with the release of PPi. The sequence is that of Hypoxanthine-guanine phosphoribosyltransferase (hpt) from Streptococcus agalactiae serotype III (strain NEM316).